A 376-amino-acid polypeptide reads, in one-letter code: Branched-chain-amino-acid aminotransferase, cytosolic (376 aa).

N6-(pyridoxal phosphate)lysine is present on lysine 202.

Belongs to the class-IV pyridoxal-phosphate-dependent aminotransferase family. Pyridoxal 5'-phosphate serves as cofactor.

The protein localises to the cytoplasm. The enzyme catalyses L-leucine + 2-oxoglutarate = 4-methyl-2-oxopentanoate + L-glutamate. It catalyses the reaction L-isoleucine + 2-oxoglutarate = (S)-3-methyl-2-oxopentanoate + L-glutamate. The catalysed reaction is L-valine + 2-oxoglutarate = 3-methyl-2-oxobutanoate + L-glutamate. It carries out the reaction a 2-oxocarboxylate + L-methionine = 4-methylsulfanyl-2-oxobutanoate + an L-alpha-amino acid. Its pathway is amino-acid biosynthesis; L-isoleucine biosynthesis; L-isoleucine from 2-oxobutanoate: step 4/4. It functions in the pathway amino-acid biosynthesis; L-leucine biosynthesis; L-leucine from 3-methyl-2-oxobutanoate: step 4/4. It participates in amino-acid biosynthesis; L-valine biosynthesis; L-valine from pyruvate: step 4/4. The protein operates within amino-acid biosynthesis; L-methionine biosynthesis via salvage pathway; L-methionine from S-methyl-5-thio-alpha-D-ribose 1-phosphate: step 6/6. Its function is as follows. Cytoplasmic isozyme of branched-chain-amino-acid aminotransferase, which catalyzes the first reaction in the catabolism of the essential branched chain amino acids (BCAAs) leucine, isoleucine, and valine. Catalyzes the formation of methionine from 2-keto-4-methylthiobutyrate (KMTB) in the methionine salvage pathway primarily using BCAAs (leucine, isoleucine, and valine) as well as lysine and proline as the amino donors. Involved in cell cycle regulation. The protein is Branched-chain-amino-acid aminotransferase, cytosolic of Saccharomyces cerevisiae (strain ATCC 204508 / S288c) (Baker's yeast).